The sequence spans 639 residues: Threonine--tRNA ligase (639 aa).

Positions 1–61 (MIKVALKDGS…DTDCDLNLFK (61 aa)) constitute a TGS domain. Residues 242–532 (DHRKLGKELG…LIEHYAGKFP (291 aa)) form a catalytic region. Zn(2+)-binding residues include cysteine 333, histidine 384, and histidine 509.

Belongs to the class-II aminoacyl-tRNA synthetase family. Homodimer. Zn(2+) serves as cofactor.

It localises to the cytoplasm. It catalyses the reaction tRNA(Thr) + L-threonine + ATP = L-threonyl-tRNA(Thr) + AMP + diphosphate + H(+). Functionally, catalyzes the attachment of threonine to tRNA(Thr) in a two-step reaction: L-threonine is first activated by ATP to form Thr-AMP and then transferred to the acceptor end of tRNA(Thr). Also edits incorrectly charged L-seryl-tRNA(Thr). The chain is Threonine--tRNA ligase from Clostridioides difficile (strain 630) (Peptoclostridium difficile).